Consider the following 439-residue polypeptide: Protein dumpy-20 (439 aa).

The tract at residues Gly-93–Val-116 is disordered. Residues Ser-96–Val-116 are compositionally biased toward low complexity. 2 consecutive BED-type zinc fingers follow at residues Pro-135–Val-184 and Lys-349–Val-398. Cys-154, Cys-157, His-172, His-177, Cys-368, Cys-371, His-386, and His-391 together coordinate Zn(2+).

In terms of biological role, involved in cuticle function and is essential for normal morphological development. The chain is Protein dumpy-20 (dpy-20) from Caenorhabditis briggsae.